The sequence spans 185 residues: Ribosome-recycling factor (185 aa).

Belongs to the RRF family.

Its subcellular location is the cytoplasm. Responsible for the release of ribosomes from messenger RNA at the termination of protein biosynthesis. May increase the efficiency of translation by recycling ribosomes from one round of translation to another. The sequence is that of Ribosome-recycling factor from Finegoldia magna (strain ATCC 29328 / DSM 20472 / WAL 2508) (Peptostreptococcus magnus).